Here is a 754-residue protein sequence, read N- to C-terminus: 5-methyltetrahydropteroyltriglutamate--homocysteine methyltransferase (754 aa).

5-methyltetrahydropteroyltri-L-glutamate is bound by residues 15 to 18 (RELK) and lysine 114. L-homocysteine is bound by residues 430-432 (IGS) and glutamate 483. L-methionine is bound by residues 430–432 (IGS) and glutamate 483. 5-methyltetrahydropteroyltri-L-glutamate contacts are provided by residues 514–515 (RC) and tryptophan 560. Residue aspartate 598 participates in L-homocysteine binding. Aspartate 598 serves as a coordination point for L-methionine. Glutamate 604 contributes to the 5-methyltetrahydropteroyltri-L-glutamate binding site. Histidine 641, cysteine 643, and glutamate 665 together coordinate Zn(2+). Histidine 694 functions as the Proton donor in the catalytic mechanism. Residue cysteine 726 participates in Zn(2+) binding.

It belongs to the vitamin-B12 independent methionine synthase family. Requires Zn(2+) as cofactor.

The enzyme catalyses 5-methyltetrahydropteroyltri-L-glutamate + L-homocysteine = tetrahydropteroyltri-L-glutamate + L-methionine. The protein operates within amino-acid biosynthesis; L-methionine biosynthesis via de novo pathway; L-methionine from L-homocysteine (MetE route): step 1/1. Functionally, catalyzes the transfer of a methyl group from 5-methyltetrahydrofolate to homocysteine resulting in methionine formation. This chain is 5-methyltetrahydropteroyltriglutamate--homocysteine methyltransferase, found in Campylobacter jejuni subsp. jejuni serotype O:2 (strain ATCC 700819 / NCTC 11168).